The primary structure comprises 87 residues: Mitochondrial import protein 2 (87 aa).

Residues 1–53 (MADSEDTSVILQGIDTINSVEGLEEDGYLSDEDTSLSNELADAQRQWEESLQQ) lie on the Cytoplasmic side of the membrane. Residues 54–71 (LNKLLNWVLLPLLGKYIG) traverse the membrane as a helical segment. Over 72–87 (RRMAKTLWSRFIEHFV) the chain is Mitochondrial intermembrane.

This sequence belongs to the MIM2 family. As to quaternary structure, component of the MIM complex containing at least MIM1 and MIM2. Interacts with MIM1; interaction is direct.

It localises to the mitochondrion outer membrane. Component of the MIM complex required for outer membrane protein import. Involved in import of the subset of proteins with multiple alpha-helical transmembrane segments, including UGO1, TOM20 and FZO1. The chain is Mitochondrial import protein 2 from Saccharomyces cerevisiae (strain ATCC 204508 / S288c) (Baker's yeast).